The following is a 111-amino-acid chain: X antigen family member 2 (111 aa).

Disordered stretches follow at residues 1 to 61 (MSWR…AAEI) and 77 to 111 (KTGDGCEGGTDVKGKILPKAEHFKMPEAGEGKSQV). The segment covering 86-111 (TDVKGKILPKAEHFKMPEAGEGKSQV) has biased composition (basic and acidic residues).

It belongs to the GAGE family.

This Homo sapiens (Human) protein is X antigen family member 2 (XAGE2).